The sequence spans 341 residues: UDP-N-acetylenolpyruvoylglucosamine reductase (341 aa).

The FAD-binding PCMH-type domain occupies 13 to 185; it reads FGVEQSCLSM…TAVGLRLPKA (173 aa). Arg-161 is an active-site residue. The active-site Proton donor is the Ser-231. Glu-327 is an active-site residue.

The protein belongs to the MurB family. The cofactor is FAD.

Its subcellular location is the cytoplasm. The enzyme catalyses UDP-N-acetyl-alpha-D-muramate + NADP(+) = UDP-N-acetyl-3-O-(1-carboxyvinyl)-alpha-D-glucosamine + NADPH + H(+). It participates in cell wall biogenesis; peptidoglycan biosynthesis. Its function is as follows. Cell wall formation. This Shewanella sp. (strain MR-7) protein is UDP-N-acetylenolpyruvoylglucosamine reductase.